The primary structure comprises 640 residues: RecBCD enzyme subunit RecD (640 aa).

ATP is bound at residue 194–201 (GGPGTGKT).

This sequence belongs to the RecD family. In terms of assembly, heterotrimer of RecB, RecC and RecD. All subunits contribute to DNA-binding.

The enzyme catalyses Couples ATP hydrolysis with the unwinding of duplex DNA at the replication fork by translocating in the 5'-3' direction. This creates two antiparallel DNA single strands (ssDNA). The leading ssDNA polymer is the template for DNA polymerase III holoenzyme which synthesizes a continuous strand.. It catalyses the reaction ATP + H2O = ADP + phosphate + H(+). Its function is as follows. A helicase/nuclease that prepares dsDNA breaks (DSB) for recombinational DNA repair. Binds to DSBs and unwinds DNA via a highly rapid and processive ATP-dependent bidirectional helicase activity. Unwinds dsDNA until it encounters a Chi (crossover hotspot instigator) sequence from the 3' direction. Cuts ssDNA a few nucleotides 3' to the Chi site. The properties and activities of the enzyme are changed at Chi. The Chi-altered holoenzyme produces a long 3'-ssDNA overhang and facilitates RecA-binding to the ssDNA for homologous DNA recombination and repair. Holoenzyme degrades any linearized DNA that is unable to undergo homologous recombination. In the holoenzyme this subunit has ssDNA-dependent ATPase and 5'-3' helicase activity. When added to pre-assembled RecBC greatly stimulates nuclease activity and augments holoenzyme processivity. Negatively regulates the RecA-loading ability of RecBCD. The polypeptide is RecBCD enzyme subunit RecD (Haemophilus influenzae (strain ATCC 51907 / DSM 11121 / KW20 / Rd)).